The primary structure comprises 101 residues: Small ribosomal subunit protein uS14 (101 aa).

Belongs to the universal ribosomal protein uS14 family. As to quaternary structure, part of the 30S ribosomal subunit. Contacts proteins S3 and S10.

In terms of biological role, binds 16S rRNA, required for the assembly of 30S particles and may also be responsible for determining the conformation of the 16S rRNA at the A site. This chain is Small ribosomal subunit protein uS14, found in Haemophilus influenzae (strain PittGG).